Reading from the N-terminus, the 465-residue chain is Iron-sulfur cluster assembly SufBD family protein SAR0880 (465 aa).

It belongs to the iron-sulfur cluster assembly SufBD family.

The protein is Iron-sulfur cluster assembly SufBD family protein SAR0880 of Staphylococcus aureus (strain MRSA252).